We begin with the raw amino-acid sequence, 412 residues long: Multifunctional CCA protein (412 aa).

Positions 8 and 11 each coordinate ATP. CTP contacts are provided by glycine 8 and arginine 11. Mg(2+) contacts are provided by aspartate 21 and aspartate 23. ATP is bound by residues arginine 91, arginine 137, and arginine 140. Arginine 91, arginine 137, and arginine 140 together coordinate CTP. One can recognise an HD domain in the interval 228–329; it reads TGIHTLMTLS…VKLFDSIDAW (102 aa).

Belongs to the tRNA nucleotidyltransferase/poly(A) polymerase family. Bacterial CCA-adding enzyme type 1 subfamily. In terms of assembly, monomer. Can also form homodimers and oligomers. Mg(2+) serves as cofactor. Requires Ni(2+) as cofactor.

It carries out the reaction a tRNA precursor + 2 CTP + ATP = a tRNA with a 3' CCA end + 3 diphosphate. The catalysed reaction is a tRNA with a 3' CCA end + 2 CTP + ATP = a tRNA with a 3' CCACCA end + 3 diphosphate. Functionally, catalyzes the addition and repair of the essential 3'-terminal CCA sequence in tRNAs without using a nucleic acid template. Adds these three nucleotides in the order of C, C, and A to the tRNA nucleotide-73, using CTP and ATP as substrates and producing inorganic pyrophosphate. tRNA 3'-terminal CCA addition is required both for tRNA processing and repair. Also involved in tRNA surveillance by mediating tandem CCA addition to generate a CCACCA at the 3' terminus of unstable tRNAs. While stable tRNAs receive only 3'-terminal CCA, unstable tRNAs are marked with CCACCA and rapidly degraded. The sequence is that of Multifunctional CCA protein from Escherichia coli O157:H7.